Here is a 211-residue protein sequence, read N- to C-terminus: ATP phosphoribosyltransferase (211 aa).

It belongs to the ATP phosphoribosyltransferase family. Short subfamily. Heteromultimer composed of HisG and HisZ subunits.

The protein resides in the cytoplasm. The catalysed reaction is 1-(5-phospho-beta-D-ribosyl)-ATP + diphosphate = 5-phospho-alpha-D-ribose 1-diphosphate + ATP. Its pathway is amino-acid biosynthesis; L-histidine biosynthesis; L-histidine from 5-phospho-alpha-D-ribose 1-diphosphate: step 1/9. Its function is as follows. Catalyzes the condensation of ATP and 5-phosphoribose 1-diphosphate to form N'-(5'-phosphoribosyl)-ATP (PR-ATP). Has a crucial role in the pathway because the rate of histidine biosynthesis seems to be controlled primarily by regulation of HisG enzymatic activity. The sequence is that of ATP phosphoribosyltransferase from Bacillus cereus (strain ATCC 10987 / NRS 248).